Consider the following 376-residue polypeptide: Glutamate 5-kinase (376 aa).

Lysine 15 contributes to the ATP binding site. Positions 55, 141, and 153 each coordinate substrate. ATP-binding positions include 173–174 (SD) and 215–221 (TGGMQTK). Residues 280 to 361 (AGRLTVDAGA…HAIAEVLDEA (82 aa)) enclose the PUA domain.

Belongs to the glutamate 5-kinase family.

Its subcellular location is the cytoplasm. The enzyme catalyses L-glutamate + ATP = L-glutamyl 5-phosphate + ADP. It functions in the pathway amino-acid biosynthesis; L-proline biosynthesis; L-glutamate 5-semialdehyde from L-glutamate: step 1/2. Catalyzes the transfer of a phosphate group to glutamate to form L-glutamate 5-phosphate. This is Glutamate 5-kinase from Salinibacter ruber (strain DSM 13855 / M31).